The chain runs to 486 residues: ATP-dependent rRNA helicase RRP3 (486 aa).

The segment at 1–58 (MNGAKRRKVAQDTPRNTKPVAQEKPARAEPKPSSDEESEEESATLEEPSAEETAVDAP) is disordered. Residues 24–34 (KPARAEPKPSS) are compositionally biased toward basic and acidic residues. Over residues 35–54 (DEESEEESATLEEPSAEETA) the composition is skewed to acidic residues. The Q motif signature appears at 60–88 (KTFKDLGVNDALCEACEKLNYKYPTPIQE). The Helicase ATP-binding domain maps to 91-262 (IPVALQGRDI…RASLRDPVKV (172 aa)). 104–111 (AETGSGKT) is an ATP binding site. The DEAD box signature appears at 210–213 (DEAD). Residues 286-434 (QKDVHLIYLI…EYPTEKEEVM (149 aa)) enclose the Helicase C-terminal domain. Basic and acidic residues-rich tracts occupy residues 451-460 (MKSFTEERGK) and 476-486 (RGRDDMDREEG). The interval 451 to 486 (MKSFTEERGKKGSTLKGGRGKKGGKRGRDDMDREEG) is disordered.

This sequence belongs to the DEAD box helicase family. DDX47/RRP3 subfamily. Interacts with the SSU processome.

It is found in the nucleus. It catalyses the reaction ATP + H2O = ADP + phosphate + H(+). Its function is as follows. ATP-dependent rRNA helicase required for pre-ribosomal RNA processing. Involved in the maturation of the 35S-pre-rRNA and to its cleavage to mature 18S rRNA. In Gibberella zeae (strain ATCC MYA-4620 / CBS 123657 / FGSC 9075 / NRRL 31084 / PH-1) (Wheat head blight fungus), this protein is ATP-dependent rRNA helicase RRP3.